A 137-amino-acid chain; its full sequence is Putative pre-16S rRNA nuclease (137 aa).

Belongs to the YqgF nuclease family.

It is found in the cytoplasm. Its function is as follows. Could be a nuclease involved in processing of the 5'-end of pre-16S rRNA. The protein is Putative pre-16S rRNA nuclease of Buchnera aphidicola subsp. Baizongia pistaciae (strain Bp).